The following is a 103-amino-acid chain: Nucleoid-associated protein Anae109_3761 (103 aa).

The protein belongs to the YbaB/EbfC family. In terms of assembly, homodimer.

Its subcellular location is the cytoplasm. The protein resides in the nucleoid. Binds to DNA and alters its conformation. May be involved in regulation of gene expression, nucleoid organization and DNA protection. In Anaeromyxobacter sp. (strain Fw109-5), this protein is Nucleoid-associated protein Anae109_3761.